The sequence spans 293 residues: Eukaryotic translation initiation factor 3 subunit G (293 aa).

2 disordered regions span residues 1–32 (MPSI…PKET) and 163–206 (STGE…QPNR). Residues 194-206 (GGTRRGESMQPNR) are compositionally biased toward basic and acidic residues. Residues 212-290 (ATIRVTNLSE…LILNVEWAKP (79 aa)) enclose the RRM domain.

It belongs to the eIF-3 subunit G family. As to quaternary structure, component of the eukaryotic translation initiation factor 3 (eIF-3) complex, which is composed of 13 subunits: eif3a, eif3b, eif3c, eif3d, eif3e, eif3f, eif3g, eif3h, eif3i, eif3j, eif3k, eif3l and eif3m.

It localises to the cytoplasm. Its function is as follows. RNA-binding component of the eukaryotic translation initiation factor 3 (eIF-3) complex, which is involved in protein synthesis of a specialized repertoire of mRNAs and, together with other initiation factors, stimulates binding of mRNA and methionyl-tRNAi to the 40S ribosome. The eIF-3 complex specifically targets and initiates translation of a subset of mRNAs involved in cell proliferation. This subunit can bind 18S rRNA. This chain is Eukaryotic translation initiation factor 3 subunit G (eif3g), found in Danio rerio (Zebrafish).